A 63-amino-acid polypeptide reads, in one-letter code: Large ribosomal subunit protein uL29 (63 aa).

Belongs to the universal ribosomal protein uL29 family.

The sequence is that of Large ribosomal subunit protein uL29 from Histophilus somni (strain 129Pt) (Haemophilus somnus).